The primary structure comprises 193 residues: Interferon lambda-2 (193 aa).

The N-terminal stretch at 1–19 is a signal peptide; that stretch reads MLLLLLPLLLAAVLTRTQA. N-linked (GlcNAc...) asparagine glycosylation occurs at asparagine 105.

The protein belongs to the lambda interferon family.

The protein resides in the secreted. In terms of biological role, cytokine with antiviral, antitumour and immunomodulatory activities. Plays a critical role in the antiviral host defense, predominantly in the epithelial tissues. Acts as a ligand for the heterodimeric class II cytokine receptor composed of IL10RB and IFNLR1, and receptor engagement leads to the activation of the JAK/STAT signaling pathway resulting in the expression of IFN-stimulated genes (ISG), which mediate the antiviral state. Has a restricted receptor distribution and therefore restricted targets: is primarily active in epithelial cells and this cell type-selective action is because of the epithelial cell-specific expression of its receptor IFNLR1. Seems not to be essential for early virus-activated host defense in vaginal infection, but plays an important role in Toll-like receptor (TLR)-induced antiviral defense. Plays a significant role in the antiviral immune defense in the intestinal epithelium. Exerts an immunomodulatory effect by up-regulating MHC class I antigen expression. This Mus musculus (Mouse) protein is Interferon lambda-2 (Ifnl2).